Here is a 171-residue protein sequence, read N- to C-terminus: MNHFELFGLPPQFSLDGSLLSSQFRELQKRFHPDNFATASERDRLLAVQKAAQINDAYQVLKNPISRAEYLLSQNGLEIRGEQQTMQDPMFLMEQMELREELEEIPHGSDAESALAAFDARVSKMYKQHLASIEQELNDAQWPQAADRVRKLKFIAKLKNEIELVEEKLFG.

A J domain is found at 2–74; that stretch reads NHFELFGLPP…ISRAEYLLSQ (73 aa).

The protein belongs to the HscB family. Interacts with HscA and stimulates its ATPase activity.

Its function is as follows. Co-chaperone involved in the maturation of iron-sulfur cluster-containing proteins. Seems to help targeting proteins to be folded toward HscA. The protein is Co-chaperone protein HscB homolog of Vibrio vulnificus (strain YJ016).